We begin with the raw amino-acid sequence, 188 residues long: Protein GrpE 2 (188 aa).

It belongs to the GrpE family. As to quaternary structure, homodimer.

The protein localises to the cytoplasm. Its function is as follows. Participates actively in the response to hyperosmotic and heat shock by preventing the aggregation of stress-denatured proteins, in association with DnaK and GrpE. It is the nucleotide exchange factor for DnaK and may function as a thermosensor. Unfolded proteins bind initially to DnaJ; upon interaction with the DnaJ-bound protein, DnaK hydrolyzes its bound ATP, resulting in the formation of a stable complex. GrpE releases ADP from DnaK; ATP binding to DnaK triggers the release of the substrate protein, thus completing the reaction cycle. Several rounds of ATP-dependent interactions between DnaJ, DnaK and GrpE are required for fully efficient folding. The sequence is that of Protein GrpE 2 from Buchnera aphidicola subsp. Acyrthosiphon pisum (strain APS) (Acyrthosiphon pisum symbiotic bacterium).